A 310-amino-acid polypeptide reads, in one-letter code: Glutaminase (310 aa).

Substrate-binding residues include S66, N117, E161, N168, Y192, Y244, and V262. Residue K294 is modified to N6-acetyllysine.

This sequence belongs to the glutaminase family. In terms of assembly, homotetramer.

It catalyses the reaction L-glutamine + H2O = L-glutamate + NH4(+). The polypeptide is Glutaminase (Escherichia coli O81 (strain ED1a)).